The primary structure comprises 333 residues: Probable tRNA pseudouridine synthase B (333 aa).

Catalysis depends on Asp71, which acts as the Nucleophile. Residues 238-313 (LPKIWVRDSA…LVARTDRVVM (76 aa)) enclose the PUA domain.

It belongs to the pseudouridine synthase TruB family. Type 2 subfamily.

The enzyme catalyses uridine(55) in tRNA = pseudouridine(55) in tRNA. In terms of biological role, could be responsible for synthesis of pseudouridine from uracil-55 in the psi GC loop of transfer RNAs. The polypeptide is Probable tRNA pseudouridine synthase B (Pyrobaculum calidifontis (strain DSM 21063 / JCM 11548 / VA1)).